The following is a 212-amino-acid chain: Regulatory protein RecX (212 aa).

The protein belongs to the RecX family.

Its subcellular location is the cytoplasm. Its function is as follows. Modulates RecA activity. In Clostridium perfringens (strain SM101 / Type A), this protein is Regulatory protein RecX.